The chain runs to 205 residues: Phosphoenolpyruvate guanylyltransferase (205 aa).

Phosphoenolpyruvate is bound by residues Thr137, Gly153, and Ser156.

Belongs to the CofC family.

It carries out the reaction phosphoenolpyruvate + GTP + H(+) = enolpyruvoyl-2-diphospho-5'-guanosine + diphosphate. Its pathway is cofactor biosynthesis; coenzyme F420 biosynthesis. In terms of biological role, guanylyltransferase that catalyzes the activation of phosphoenolpyruvate (PEP) as enolpyruvoyl-2-diphospho-5'-guanosine, via the condensation of PEP with GTP. It is involved in the biosynthesis of coenzyme F420, a hydride carrier cofactor. The chain is Phosphoenolpyruvate guanylyltransferase from Rubrobacter xylanophilus (strain DSM 9941 / JCM 11954 / NBRC 16129 / PRD-1).